A 65-amino-acid chain; its full sequence is Large ribosomal subunit protein bL33 (65 aa).

Residues 17–40 are disordered; it reads SRSVPSSEKRSAGVSRYTTEKNRR.

Belongs to the bacterial ribosomal protein bL33 family.

This is Large ribosomal subunit protein bL33 from Prochlorococcus marinus (strain NATL1A).